Consider the following 260-residue polypeptide: Acetylglutamate kinase (260 aa).

Residues 46–47 (GG), Arg68, and Asn160 contribute to the substrate site.

The protein belongs to the acetylglutamate kinase family. ArgB subfamily.

The protein localises to the cytoplasm. The catalysed reaction is N-acetyl-L-glutamate + ATP = N-acetyl-L-glutamyl 5-phosphate + ADP. It functions in the pathway amino-acid biosynthesis; L-arginine biosynthesis; N(2)-acetyl-L-ornithine from L-glutamate: step 2/4. In terms of biological role, catalyzes the ATP-dependent phosphorylation of N-acetyl-L-glutamate. This is Acetylglutamate kinase from Shewanella sp. (strain W3-18-1).